The primary structure comprises 203 residues: LexA repressor (203 aa).

Residues 28–48 constitute a DNA-binding region (H-T-H motif); it reads RAEIASQLGFRSPNAAEEHLK. Active-site for autocatalytic cleavage activity residues include Ser-120 and Lys-157.

The protein belongs to the peptidase S24 family. As to quaternary structure, homodimer.

The catalysed reaction is Hydrolysis of Ala-|-Gly bond in repressor LexA.. Its function is as follows. Represses a number of genes involved in the response to DNA damage (SOS response), including recA and lexA. Binds to the 16 bp palindromic sequence 5'-CTGTATATATATACAG-3'. In the presence of single-stranded DNA, RecA interacts with LexA causing an autocatalytic cleavage which disrupts the DNA-binding part of LexA, leading to derepression of the SOS regulon and eventually DNA repair. The chain is LexA repressor from Proteus mirabilis (strain HI4320).